Consider the following 319-residue polypeptide: NADH-quinone oxidoreductase subunit H 1 (319 aa).

8 consecutive transmembrane segments (helical) span residues 8 to 28, 74 to 94, 107 to 127, 147 to 167, 179 to 199, 230 to 250, 258 to 278, and 297 to 317; these read LFNI…LIWI, LVFI…FAVI, IGLL…VLGG, LSYE…AGTF, MWFC…GIAE, FFVG…TLFF, LPPL…FILL, and LMLP…LALD.

The protein belongs to the complex I subunit 1 family. In terms of assembly, NDH-1 is composed of 14 different subunits. Subunits NuoA, H, J, K, L, M, N constitute the membrane sector of the complex.

It localises to the cell inner membrane. The catalysed reaction is a quinone + NADH + 5 H(+)(in) = a quinol + NAD(+) + 4 H(+)(out). Functionally, NDH-1 shuttles electrons from NADH, via FMN and iron-sulfur (Fe-S) centers, to quinones in the respiratory chain. The immediate electron acceptor for the enzyme in this species is believed to be ubiquinone. Couples the redox reaction to proton translocation (for every two electrons transferred, four hydrogen ions are translocated across the cytoplasmic membrane), and thus conserves the redox energy in a proton gradient. This subunit may bind ubiquinone. The polypeptide is NADH-quinone oxidoreductase subunit H 1 (Nitrosococcus oceani (strain ATCC 19707 / BCRC 17464 / JCM 30415 / NCIMB 11848 / C-107)).